A 711-amino-acid chain; its full sequence is Polyribonucleotide nucleotidyltransferase (711 aa).

The Mg(2+) site is built by aspartate 486 and aspartate 492. In terms of domain architecture, KH spans 553-612; sequence PRIHTIKINPDKIKDVIGKGGSVIRALTEETGTTIEIEDDGTVKIAATDGEKAKHAIRRI. The 69-residue stretch at 622–690 folds into the S1 motif domain; it reads GRVYTGKVTR…RQGRIRLSIK (69 aa). The disordered stretch occupies residues 689 to 711; sequence IKEATEQSQPAAAPEAPAAEQGE. A compositionally biased stretch (low complexity) spans 694–711; it reads EQSQPAAAPEAPAAEQGE.

The protein belongs to the polyribonucleotide nucleotidyltransferase family. Component of the RNA degradosome, which is a multiprotein complex involved in RNA processing and mRNA degradation. Requires Mg(2+) as cofactor.

It localises to the cytoplasm. It carries out the reaction RNA(n+1) + phosphate = RNA(n) + a ribonucleoside 5'-diphosphate. Functionally, involved in mRNA degradation. Catalyzes the phosphorolysis of single-stranded polyribonucleotides processively in the 3'- to 5'-direction. This is Polyribonucleotide nucleotidyltransferase from Escherichia coli (strain ATCC 8739 / DSM 1576 / NBRC 3972 / NCIMB 8545 / WDCM 00012 / Crooks).